We begin with the raw amino-acid sequence, 334 residues long: Heat-inducible transcription repressor HrcA (334 aa).

This sequence belongs to the HrcA family.

Its function is as follows. Negative regulator of class I heat shock genes (grpE-dnaK-dnaJ and groELS operons). Prevents heat-shock induction of these operons. The polypeptide is Heat-inducible transcription repressor HrcA (Paracidovorax citrulli (strain AAC00-1) (Acidovorax citrulli)).